Here is a 241-residue protein sequence, read N- to C-terminus: Probable xyloglucan-specific endo-beta-1,4-glucanase A (241 aa).

The signal sequence occupies residues 1 to 18 (MKFNLALALSLTVATAEA).

It belongs to the glycosyl hydrolase 12 (cellulase H) family.

It is found in the secreted. It carries out the reaction xyloglucan + H2O = xyloglucan oligosaccharides.. Catalyzes endohydrolysis of 1,4-beta-D-glucosidic linkages in xyloglucan with retention of the beta-configuration of the glycosyl residues. Specific for xyloglucan and does not hydrolyze other cell wall components. The sequence is that of Probable xyloglucan-specific endo-beta-1,4-glucanase A (xgeA) from Aspergillus clavatus (strain ATCC 1007 / CBS 513.65 / DSM 816 / NCTC 3887 / NRRL 1 / QM 1276 / 107).